A 526-amino-acid chain; its full sequence is tRNA (guanine(26)-N(2))-dimethyltransferase (526 aa).

The segment covering Met1–Asp10 has biased composition (polar residues). The segment at Met1 to Glu20 is disordered. The region spanning Thr22–Tyr441 is the Trm1 methyltransferase domain. S-adenosyl-L-methionine contacts are provided by Arg47, Arg104, and Asp122. Positions 286, 289, 325, and 328 each coordinate Zn(2+). The tract at residues Lys498 to Glu526 is disordered.

This sequence belongs to the class I-like SAM-binding methyltransferase superfamily. Trm1 family.

It carries out the reaction guanosine(26) in tRNA + 2 S-adenosyl-L-methionine = N(2)-dimethylguanosine(26) in tRNA + 2 S-adenosyl-L-homocysteine + 2 H(+). Dimethylates a single guanine residue at position 26 of most tRNAs using S-adenosyl-L-methionine as donor of the methyl groups. The sequence is that of tRNA (guanine(26)-N(2))-dimethyltransferase (trm-1) from Caenorhabditis elegans.